The following is a 426-amino-acid chain: Potassium channel subfamily K member 2 (426 aa).

The Cytoplasmic portion of the chain corresponds to 1–61; the sequence is MLASASRERP…SAINVMKWKT (61 aa). Important for GNG4 binding and L-glutamate release in astrocytes stretches follow at residues 17 to 38 and 51 to 61; these read AAPDLLDPKSAAQNSKPRLSFS and DSAINVMKWKT. Residues 62–82 form a helical membrane-spanning segment; the sequence is VSTIFLVVVLYLIIGATVFKA. Residues Asn-110 and Asn-134 are each glycosylated (N-linked (GlcNAc...) asparagine). An intramembrane region (pore-forming) is located at residues 144–170; it reads LGSSFFFAGTVITTIGFGNISPRTEGG. Positions 157, 158, 159, and 160 each coordinate K(+). The segment at 157–162 is selectivity filter 1; sequence TIGFGN. The helical transmembrane segment at 172–192 threads the bilayer; sequence IFCIIYALLGIPLFGFLLAGV. Residues 193–222 lie on the Cytoplasmic side of the membrane; that stretch reads GDQLGTIFGKGIAKVEDTFIKWNVSQTKIR. Residues 223 to 243 form a helical membrane-spanning segment; it reads IISTIIFILFGCVLFVALPAV. An intramembrane region (pore-forming) is located at residues 253–283; that stretch reads ALDAIYFVVITLTTIGFGDYVAGGSDIEYLD. The K(+) site is built by Thr-266, Ile-267, Gly-268, and Phe-269. The tract at residues 266–271 is selectivity filter 2; sequence TIGFGD. A helical transmembrane segment spans residues 288 to 308; sequence VVWFWILVGLAYFAAVLSMIG. At 309–426 the chain is on the cytoplasmic side; it reads DWLRVISKKT…EDIAVIENMK (118 aa). The interaction with AKAP5 stretch occupies residues 313 to 326; the sequence is VISKKTKEEVGEFR. The tract at residues 337-385 is essential for chloroform and halothane sensitivity; that stretch reads TAEFKETRRRLSVEIYDKFQRATSVKRKLSAELAGNHNQELTPCRRTLS. Ser-348 carries the post-translational modification Phosphoserine; by PKA.

Belongs to the two pore domain potassium channel (TC 1.A.1.8) family. As to quaternary structure, homodimer; disulfide-linked. Forms heterodimers with other 2-pore domain K(+) channel subunits, such as KCNK1, KCNK4, KCNK10 and KCNK18. Interacts with AKAP5; the channel is recruited to postsynaptic microdomains by AKAP5 where it can integrate neurotransmitter receptor signals. Part of a complex composed of AKAP5 and ADRB2. Upon AKAP5 binding, the channel is no longer sensitive to intracellular acidification, membrane stretch or arachidonic acid stimuli. Interacts with POPDC1; the interaction enhances KCNK2 surface expression and is inhibited by cAMP. Interacts (via N-terminus) with G-protein subunit GNG4 (via C-terminus); this interaction confers ion selectivity to L-glutamate and Cl(-) anions. Phosphorylation at Ser-348 controls the reversible conversion from a leak channel to a voltage-dependent channel. Expressed in cardiomyocytes (at protein level). Expressed in various brain regions including the lateral olfactory tract, piriform cortex of the forebrain, paraventricular and anteromedial thalamic nuclei, brainstem, caudate putamen, nucleus accumbens, neocortex and interpeduncular nucleus. Detected in astrocytes in hippocampus stratum radiatum. As to expression, expressed in brain and kidney.

It localises to the cell membrane. Its subcellular location is the endoplasmic reticulum membrane. It is found in the cell projection. The protein resides in the axon. The protein localises to the dendrite. It localises to the postsynaptic density membrane. Its subcellular location is the sarcolemma. The catalysed reaction is K(+)(in) = K(+)(out). The enzyme catalyses L-glutamate(out) = L-glutamate(in). It carries out the reaction chloride(in) = chloride(out). It catalyses the reaction Rb(+)(in) = Rb(+)(out). The catalysed reaction is Cs(+)(in) = Cs(+)(out). Activated by various stimuli including intracellular acidic pH, mechanical stretch and polyunsaturated fatty acids such as arachidonic acid. Functionally, k(+) channel that conducts voltage-dependent outward rectifying currents upon membrane depolarization. Voltage sensing is coupled to K(+) electrochemical gradient in an 'ion flux gating' mode where outward but not inward ion flow opens the gate. Converts to voltage-independent 'leak' conductance mode upon stimulation by various stimuli including mechanical membrane stretch, acidic pH, heat and lipids. Reversibly converts between a voltage-insensitive K(+) 'leak' channel and a voltage-dependent outward rectifying K(+) channel in a phosphorylation-dependent manner. Homo- and heterodimerizes to form functional channels with distinct regulatory and gating properties. In trigeminal ganglia sensory neurons, the heterodimer of KCNK2/TREK-1 and KCNK18/TRESK inhibits neuronal firing and neurogenic inflammation by stabilizing the resting membrane potential at K(+) equilibrium potential as well as by regulating the threshold of action potentials and the spike frequency. At trigeminal A-beta afferent nerves, the heterodimer of KCNK2/TREK-1 and KCNK4/TRAAK is mostly coexpressed at nodes of Ranvier where it conducts voltage-independent mechanosensitive and thermosensitive currents, allowing rapid action potential repolarization, high speed and high frequence saltatory conduction on myelinated nerves to ensure prompt sensory responses. In hippocampal astrocytes, the heterodimer of KCNK2/TREK-1 and KCNK1/TWIK-1 allows passive K(+) conductance under basal conditions, but changes ion selectivity and becomes permeable to L-glutamate and Cl(-) ions upon binding to G-protein subunit GNG4 in stimulated astrocytes. Mediates rapid L-glutamate release in response to activation of G-protein-coupled receptors such as F2R and CNR1. In hippocampal pyramidal neurons, the homodimer of KCNK2/TREK-1 contributes to gamma-aminobutyric acid (GABA) B-induced slow inhibitory postsynaptic potential. Associates with AKAP5 and Gs-protein-coupled receptor B2AR at postsynaptic dense bodies and converts to a leak channel no longer sensitive to stimulation by arachidonic acid, acidic pH or mechanical stress, nor inhibited by Gq-coupled receptors but still under the negative control of Gs-coupled receptors. Permeable to other monovalent cations such as Rb(+) and Cs(+). In terms of biological role, does not display channel activity but reduces the channel activity of isoform 1, isoform 2 and isoform 4 and reduces cell surface expression of isoform 2. This Rattus norvegicus (Rat) protein is Potassium channel subfamily K member 2.